Reading from the N-terminus, the 409-residue chain is Glucose-1-phosphate adenylyltransferase (409 aa).

Alpha-D-glucose 1-phosphate contacts are provided by residues G168, 183 to 184 (EK), and S201.

Belongs to the bacterial/plant glucose-1-phosphate adenylyltransferase family. As to quaternary structure, homotetramer.

It catalyses the reaction alpha-D-glucose 1-phosphate + ATP + H(+) = ADP-alpha-D-glucose + diphosphate. It functions in the pathway glycan biosynthesis; glycogen biosynthesis. Its function is as follows. Involved in the biosynthesis of ADP-glucose, a building block required for the elongation reactions to produce glycogen. Catalyzes the reaction between ATP and alpha-D-glucose 1-phosphate (G1P) to produce pyrophosphate and ADP-Glc. In Corynebacterium glutamicum (strain R), this protein is Glucose-1-phosphate adenylyltransferase.